A 464-amino-acid polypeptide reads, in one-letter code: Serine--tRNA synthetase-like protein Slimp (464 aa).

Belongs to the class-II aminoacyl-tRNA synthetase family. Type-1 seryl-tRNA synthetase subfamily.

The protein resides in the mitochondrion. Essential protein which may play a role in mitochondrial morphogenesis and function. Has transfer RNA (tRNA)-binding activity and can bind tRNA(Ser) but does not have serine--tRNA ligase activity and does not bind ATP. This is Serine--tRNA synthetase-like protein Slimp from Drosophila melanogaster (Fruit fly).